The following is a 548-amino-acid chain: Chaperonin GroEL (548 aa).

Residues 30–33, Lys-51, 87–91, Gly-415, 479–481, and Asp-495 each bind ATP; these read TLGP, DGTTT, and NAA.

It belongs to the chaperonin (HSP60) family. In terms of assembly, forms a cylinder of 14 subunits composed of two heptameric rings stacked back-to-back. Interacts with the co-chaperonin GroES.

The protein resides in the cytoplasm. It carries out the reaction ATP + H2O + a folded polypeptide = ADP + phosphate + an unfolded polypeptide.. In terms of biological role, together with its co-chaperonin GroES, plays an essential role in assisting protein folding. The GroEL-GroES system forms a nano-cage that allows encapsulation of the non-native substrate proteins and provides a physical environment optimized to promote and accelerate protein folding. This is Chaperonin GroEL from Escherichia fergusonii (strain ATCC 35469 / DSM 13698 / CCUG 18766 / IAM 14443 / JCM 21226 / LMG 7866 / NBRC 102419 / NCTC 12128 / CDC 0568-73).